The chain runs to 494 residues: Probable cytosol aminopeptidase (494 aa).

Mn(2+) is bound by residues lysine 260 and aspartate 265. Lysine 272 is an active-site residue. Positions 283, 342, and 344 each coordinate Mn(2+). Arginine 346 is a catalytic residue.

Belongs to the peptidase M17 family. Mn(2+) is required as a cofactor.

It is found in the cytoplasm. The enzyme catalyses Release of an N-terminal amino acid, Xaa-|-Yaa-, in which Xaa is preferably Leu, but may be other amino acids including Pro although not Arg or Lys, and Yaa may be Pro. Amino acid amides and methyl esters are also readily hydrolyzed, but rates on arylamides are exceedingly low.. It carries out the reaction Release of an N-terminal amino acid, preferentially leucine, but not glutamic or aspartic acids.. In terms of biological role, presumably involved in the processing and regular turnover of intracellular proteins. Catalyzes the removal of unsubstituted N-terminal amino acids from various peptides. The chain is Probable cytosol aminopeptidase from Bacillus cereus (strain ZK / E33L).